The sequence spans 597 residues: Period protein homolog lin-42 (597 aa).

Residues 1–44 (MEPAGHSSATHNIVVPNANPTQPQPLAPAMREEGATLSPPNTWS) are disordered. The PAS domain occupies 155-223 (LQASHVSSNF…VRQAHIDLHN (69 aa)). 4 disordered regions span residues 313–335 (PVPS…QNQG), 418–450 (KSQS…EALT), 473–509 (DDVP…PPPG), and 555–597 (DGLL…DSQN). Residues 425–438 (SPAKQDEPFDEKKY) are compositionally biased toward basic and acidic residues. Residues 487-497 (IHWTSSSQNHY) are compositionally biased toward polar residues. Residues 561–577 (GATSTGGASPTSGTNSP) show a composition bias toward low complexity.

It localises to the nucleus. It is found in the cytoplasm. Transcriptional repressor which interacts with the promoter region of target genes. Has a specific role in developmental timing where it regulates temporal expression of a number of miRNAs and mRNAs. Controls temporal cell fate transition during embryonic and early larval development by restricting the expression of specific miRNAs, including let-7, miR-48, lin-4, miR-35 and miR-58. Restricts the accumulation of lin-29 in the hypodermis to the larval L4 stage, thus controlling terminal differentiation of seam cells. Has a role in the miRNA-mediated specification of asymmetric gene expression patterns in gustatory neurons. May also regulate genes involved in other biological processes including transport, small molecule metabolism, and growth. Inhibits dauer formation, by antagonizing daf-12. In terms of biological role, specifically required for maintaining the timing of larval development and molting cycle rhythms. The chain is Period protein homolog lin-42 from Caenorhabditis elegans.